The sequence spans 518 residues: Lysine--tRNA ligase (518 aa).

The segment at 1–28 (MTEPTQPNAAQPDAARPNVAPEMDDNKI) is disordered. Mg(2+)-binding residues include Glu-428 and Glu-435.

The protein belongs to the class-II aminoacyl-tRNA synthetase family. In terms of assembly, homodimer. Requires Mg(2+) as cofactor.

It localises to the cytoplasm. It catalyses the reaction tRNA(Lys) + L-lysine + ATP = L-lysyl-tRNA(Lys) + AMP + diphosphate. The polypeptide is Lysine--tRNA ligase (Paraburkholderia phytofirmans (strain DSM 17436 / LMG 22146 / PsJN) (Burkholderia phytofirmans)).